The primary structure comprises 314 residues: 2,3-dihydroxyphenylpropionate/2,3-dihydroxicinnamic acid 1,2-dioxygenase 1 (314 aa).

Residue His-115 is the Proton donor of the active site. The active-site Proton acceptor is the His-179.

Belongs to the LigB/MhpB extradiol dioxygenase family. In terms of assembly, homotetramer. Fe(2+) serves as cofactor.

It catalyses the reaction 3-(2,3-dihydroxyphenyl)propanoate + O2 = (2Z,4E)-2-hydroxy-6-oxonona-2,4-dienedioate + H(+). The catalysed reaction is (2E)-3-(2,3-dihydroxyphenyl)prop-2-enoate + O2 = (2Z,4E,7E)-2-hydroxy-6-oxonona-2,4,7-trienedioate + H(+). Its pathway is aromatic compound metabolism; 3-phenylpropanoate degradation. Functionally, catalyzes the non-heme iron(II)-dependent oxidative cleavage of 2,3-dihydroxyphenylpropionic acid and 2,3-dihydroxicinnamic acid into 2-hydroxy-6-ketononadienedioate and 2-hydroxy-6-ketononatrienedioate, respectively. This Pseudomonas putida (Arthrobacter siderocapsulatus) protein is 2,3-dihydroxyphenylpropionate/2,3-dihydroxicinnamic acid 1,2-dioxygenase 1.